A 433-amino-acid polypeptide reads, in one-letter code: D-amino acid dehydrogenase (433 aa).

3 to 17 serves as a coordination point for FAD; the sequence is VLVLGSGVIGTTSAY.

It belongs to the DadA oxidoreductase family. It depends on FAD as a cofactor.

It carries out the reaction a D-alpha-amino acid + A + H2O = a 2-oxocarboxylate + AH2 + NH4(+). Functionally, oxidative deamination of D-amino acids. This chain is D-amino acid dehydrogenase, found in Pseudomonas syringae pv. tomato (strain ATCC BAA-871 / DC3000).